The sequence spans 863 residues: Leucine--tRNA ligase (863 aa).

The 'HIGH' region motif lies at 42–52 (PYPSGRLHMGH). The short motif at 622–626 (KMSKS) is the 'KMSKS' region element. K625 contacts ATP.

It belongs to the class-I aminoacyl-tRNA synthetase family.

Its subcellular location is the cytoplasm. The enzyme catalyses tRNA(Leu) + L-leucine + ATP = L-leucyl-tRNA(Leu) + AMP + diphosphate. This chain is Leucine--tRNA ligase, found in Shewanella loihica (strain ATCC BAA-1088 / PV-4).